The primary structure comprises 103 residues: Small ribosomal subunit protein uS10 (103 aa).

The protein belongs to the universal ribosomal protein uS10 family. Part of the 30S ribosomal subunit.

Its function is as follows. Involved in the binding of tRNA to the ribosomes. The chain is Small ribosomal subunit protein uS10 from Aliivibrio fischeri (strain ATCC 700601 / ES114) (Vibrio fischeri).